Here is a 288-residue protein sequence, read N- to C-terminus: ATP synthase gamma chain (288 aa).

The protein belongs to the ATPase gamma chain family. F-type ATPases have 2 components, CF(1) - the catalytic core - and CF(0) - the membrane proton channel. CF(1) has five subunits: alpha(3), beta(3), gamma(1), delta(1), epsilon(1). CF(0) has three main subunits: a, b and c.

The protein resides in the cell inner membrane. Produces ATP from ADP in the presence of a proton gradient across the membrane. The gamma chain is believed to be important in regulating ATPase activity and the flow of protons through the CF(0) complex. The chain is ATP synthase gamma chain from Vibrio parahaemolyticus serotype O3:K6 (strain RIMD 2210633).